A 288-amino-acid chain; its full sequence is 4-diphosphocytidyl-2-C-methyl-D-erythritol kinase (288 aa).

Lysine 8 is an active-site residue. ATP is bound at residue 90 to 100; that stretch reads PLEAGLAGGSA. Residue aspartate 132 is part of the active site.

Belongs to the GHMP kinase family. IspE subfamily.

It catalyses the reaction 4-CDP-2-C-methyl-D-erythritol + ATP = 4-CDP-2-C-methyl-D-erythritol 2-phosphate + ADP + H(+). It functions in the pathway isoprenoid biosynthesis; isopentenyl diphosphate biosynthesis via DXP pathway; isopentenyl diphosphate from 1-deoxy-D-xylulose 5-phosphate: step 3/6. Its function is as follows. Catalyzes the phosphorylation of the position 2 hydroxy group of 4-diphosphocytidyl-2C-methyl-D-erythritol. This is 4-diphosphocytidyl-2-C-methyl-D-erythritol kinase from Carboxydothermus hydrogenoformans (strain ATCC BAA-161 / DSM 6008 / Z-2901).